The sequence spans 182 residues: CDP-diacylglycerol--glycerol-3-phosphate 3-phosphatidyltransferase (182 aa).

The Cytoplasmic segment spans residues 2 to 12 (QFNIPTLLTLF). The chain crosses the membrane as a helical span at residues 13 to 37 (RVILIPFFVLVFYLPVTWSPFAAAL). Residues 38–60 (IFCVAAVTDWFDGFLARRWNQST) lie on the Periplasmic side of the membrane. The chain crosses the membrane as a helical span at residues 61 to 81 (RFGAFLDPVADKVLVAIAMVL). Topologically, residues 82–86 (VTEHY) are cytoplasmic. The chain crosses the membrane as a helical span at residues 87-107 (HSWWVTLPAATMIAREIIISA). Residues 108–145 (LREWMAELGKRSSVAVSWIGKVKTTAQMVALAWLLWRP) are Periplasmic-facing. The chain crosses the membrane as a helical span at residues 146–168 (NIWVEYVGIALFFVAAVLTLWSM). The Cytoplasmic segment spans residues 169 to 181 (LQYLSAARADLLD).

This sequence belongs to the CDP-alcohol phosphatidyltransferase class-I family.

The protein resides in the cell inner membrane. The enzyme catalyses a CDP-1,2-diacyl-sn-glycerol + sn-glycerol 3-phosphate = a 1,2-diacyl-sn-glycero-3-phospho-(1'-sn-glycero-3'-phosphate) + CMP + H(+). Its pathway is phospholipid metabolism; phosphatidylglycerol biosynthesis; phosphatidylglycerol from CDP-diacylglycerol: step 1/2. Its function is as follows. Catalyzes the conversion of cytidine diphosphate diacylglycerol (CDP-DG) and glycerol 3-phosphate into phosphatidylglycerol. Essential for the synthesis of anionic phospholipids, thereby playing a role in balancing the ratio of zwitterionic and anionic phospholipids, which is thought to be important for normal membrane function. The sequence is that of CDP-diacylglycerol--glycerol-3-phosphate 3-phosphatidyltransferase from Shigella boydii serotype 4 (strain Sb227).